The chain runs to 211 residues: 7-carboxy-7-deazaguanine synthase (211 aa).

Substrate is bound by residues 22 to 24 and Arg37; that span reads LQG. In terms of domain architecture, Radical SAM core spans 28–211; sequence NTGMPSVFVR…LQTHKLIGIE (184 aa). [4Fe-4S] cluster contacts are provided by Cys41, Cys45, and Cys48. Mg(2+) is bound at residue Thr50. A substrate-binding site is contributed by Thr78. Residues Gly80 and 122–124 each bind S-adenosyl-L-methionine; that span reads SPK.

The protein belongs to the radical SAM superfamily. 7-carboxy-7-deazaguanine synthase family. In terms of assembly, homodimer. Requires [4Fe-4S] cluster as cofactor. S-adenosyl-L-methionine is required as a cofactor. The cofactor is Mg(2+).

The enzyme catalyses 6-carboxy-5,6,7,8-tetrahydropterin + H(+) = 7-carboxy-7-deazaguanine + NH4(+). It functions in the pathway purine metabolism; 7-cyano-7-deazaguanine biosynthesis. In terms of biological role, catalyzes the complex heterocyclic radical-mediated conversion of 6-carboxy-5,6,7,8-tetrahydropterin (CPH4) to 7-carboxy-7-deazaguanine (CDG), a step common to the biosynthetic pathways of all 7-deazapurine-containing compounds. The protein is 7-carboxy-7-deazaguanine synthase of Haemophilus influenzae (strain ATCC 51907 / DSM 11121 / KW20 / Rd).